Here is a 735-residue protein sequence, read N- to C-terminus: 5-methyltetrahydropteroyltriglutamate--homocysteine methyltransferase (735 aa).

5-methyltetrahydropteroyltri-L-glutamate-binding positions include 15–18 (REFK) and lysine 104. Residues 409–411 (IGS) and glutamate 462 each bind L-homocysteine. L-methionine contacts are provided by residues 409–411 (IGS) and glutamate 462. Residues 493-494 (RC) and tryptophan 539 contribute to the 5-methyltetrahydropteroyltri-L-glutamate site. Residue aspartate 577 coordinates L-homocysteine. An L-methionine-binding site is contributed by aspartate 577. Glutamate 583 is a binding site for 5-methyltetrahydropteroyltri-L-glutamate. Zn(2+) contacts are provided by histidine 618, cysteine 620, and glutamate 642. Histidine 672 serves as the catalytic Proton donor. Zn(2+) is bound at residue cysteine 704.

The protein belongs to the vitamin-B12 independent methionine synthase family. Zn(2+) is required as a cofactor.

The enzyme catalyses 5-methyltetrahydropteroyltri-L-glutamate + L-homocysteine = tetrahydropteroyltri-L-glutamate + L-methionine. Its pathway is amino-acid biosynthesis; L-methionine biosynthesis via de novo pathway; L-methionine from L-homocysteine (MetE route): step 1/1. Functionally, catalyzes the transfer of a methyl group from 5-methyltetrahydrofolate to homocysteine resulting in methionine formation. This Thermotoga petrophila (strain ATCC BAA-488 / DSM 13995 / JCM 10881 / RKU-1) protein is 5-methyltetrahydropteroyltriglutamate--homocysteine methyltransferase.